Here is a 194-residue protein sequence, read N- to C-terminus: NAD(P)H:quinone oxidoreductase (194 aa).

Belongs to the SsuE family. As to quaternary structure, homotetramer. Requires FMN as cofactor.

The enzyme catalyses a quinone + NADH + H(+) = a quinol + NAD(+). The catalysed reaction is a quinone + NADPH + H(+) = a quinol + NADP(+). Functionally, the enzyme apparently serves as a quinone reductase in connection with conjugation reactions of hydroquinones involved in detoxification pathways. The chain is NAD(P)H:quinone oxidoreductase from Solanum tuberosum (Potato).